A 253-amino-acid polypeptide reads, in one-letter code: Triosephosphate isomerase (253 aa).

Asn-9 to Lys-11 lines the substrate pocket. The active-site Electrophile is the His-95. Glu-167 acts as the Proton acceptor in catalysis. Substrate is bound by residues Gly-173, Ser-213, and Gly-234–Gly-235. Residue Ser-213 is modified to Phosphoserine.

The protein belongs to the triosephosphate isomerase family. In terms of assembly, homodimer.

Its subcellular location is the cytoplasm. The catalysed reaction is D-glyceraldehyde 3-phosphate = dihydroxyacetone phosphate. It functions in the pathway carbohydrate biosynthesis; gluconeogenesis. The protein operates within carbohydrate degradation; glycolysis; D-glyceraldehyde 3-phosphate from glycerone phosphate: step 1/1. In terms of biological role, involved in the gluconeogenesis. Catalyzes stereospecifically the conversion of dihydroxyacetone phosphate (DHAP) to D-glyceraldehyde-3-phosphate (G3P). The sequence is that of Triosephosphate isomerase from Geobacillus thermodenitrificans (strain NG80-2).